The sequence spans 182 residues: Transcription termination/antitermination protein NusG (182 aa).

The region spanning 131–163 is the KOW domain; sequence VGEQVRIQSGPFANQIGEVQEIEADKFKLTVLV.

It belongs to the NusG family.

Participates in transcription elongation, termination and antitermination. The sequence is that of Transcription termination/antitermination protein NusG from Staphylococcus epidermidis (strain ATCC 35984 / DSM 28319 / BCRC 17069 / CCUG 31568 / BM 3577 / RP62A).